We begin with the raw amino-acid sequence, 349 residues long: Protein RecA (349 aa).

Position 64–71 (64–71) interacts with ATP; sequence GPESSGKT. The disordered stretch occupies residues 328–349; it reads NGEIEVEAPSEEEFEDLPLDLK. Residues 331 to 349 show a composition bias toward acidic residues; that stretch reads IEVEAPSEEEFEDLPLDLK.

Belongs to the RecA family.

Its subcellular location is the cytoplasm. In terms of biological role, can catalyze the hydrolysis of ATP in the presence of single-stranded DNA, the ATP-dependent uptake of single-stranded DNA by duplex DNA, and the ATP-dependent hybridization of homologous single-stranded DNAs. It interacts with LexA causing its activation and leading to its autocatalytic cleavage. This Halalkalibacterium halodurans (strain ATCC BAA-125 / DSM 18197 / FERM 7344 / JCM 9153 / C-125) (Bacillus halodurans) protein is Protein RecA.